Consider the following 206-residue polypeptide: LexA repressor (206 aa).

The H-T-H motif DNA-binding region spans 28-48; that stretch reads VREIGEAVGLASSSTVHGHLD. Catalysis depends on for autocatalytic cleavage activity residues S128 and K166.

The protein belongs to the peptidase S24 family. Homodimer.

The enzyme catalyses Hydrolysis of Ala-|-Gly bond in repressor LexA.. Its function is as follows. Represses a number of genes involved in the response to DNA damage (SOS response), including recA and lexA. In the presence of single-stranded DNA, RecA interacts with LexA causing an autocatalytic cleavage which disrupts the DNA-binding part of LexA, leading to derepression of the SOS regulon and eventually DNA repair. This is LexA repressor from Exiguobacterium sp. (strain ATCC BAA-1283 / AT1b).